A 428-amino-acid chain; its full sequence is tRNA dimethylallyltransferase (428 aa).

21-28 (GTTGVGKS) is an ATP binding site. 23–28 (TGVGKS) contributes to the dimethylallyl diphosphate binding site. Interaction with substrate tRNA regions lie at residues 46–49 (DSMQ) and 170–174 (RRVQR). A core aggregation region region spans residues 199–207 (FDTLFLWLY). The interaction with isopentenylpyrophosphate transferase stretch occupies residues 210 to 232 (PEPLFQRLDDRVDDMLERGALQE). 2 interaction with substrate tRNA regions span residues 256–258 (QVI) and 284–302 (RMKT…WIKK). The segment at 373–409 (YTCNVCRNADGKNVVAIGEKYWKIHLGSRRHKSNLKR) adopts a Matrin-type zinc-finger fold. Zn(2+) is bound by residues Cys375, Cys378, His397, and His403.

It belongs to the IPP transferase family.

The protein resides in the cytoplasm. The protein localises to the mitochondrion. Its subcellular location is the nucleus. The catalysed reaction is adenosine(37) in tRNA + dimethylallyl diphosphate = N(6)-dimethylallyladenosine(37) in tRNA + diphosphate. Its function is as follows. Catalyzes the transfer of a dimethylallyl group onto the adenine at position 37 in the anticodon loop on a specific subset of tRNAs both in the cytosol and the mitochondrion, leading to the formation of N6-(dimethylallyl)adenosine (i(6)A). This modification optimizes the codon:anticodon fit in the ribosome and promotes translational fidelity. Competes with the farnesyl pyrophosphate synthase ERG20 for the common substrate dimethylallyl diphosphate (DMAPP). The polypeptide is tRNA dimethylallyltransferase (MOD5) (Saccharomyces cerevisiae (strain ATCC 204508 / S288c) (Baker's yeast)).